The following is a 160-amino-acid chain: Endoribonuclease YbeY (160 aa).

Zn(2+)-binding residues include His123, His127, and His133.

It belongs to the endoribonuclease YbeY family. Zn(2+) serves as cofactor.

The protein resides in the cytoplasm. Functionally, single strand-specific metallo-endoribonuclease involved in late-stage 70S ribosome quality control and in maturation of the 3' terminus of the 16S rRNA. In Shouchella clausii (strain KSM-K16) (Alkalihalobacillus clausii), this protein is Endoribonuclease YbeY.